The following is a 239-amino-acid chain: Ribosomal RNA large subunit methyltransferase E (239 aa).

The disordered stretch occupies residues 1-20 (MTKAPIAGNRTGRKLGQRVK). A compositionally biased stretch (basic residues) spans 11 to 20 (TGRKLGQRVK). Residues Gly81, Trp83, Asp104, Asp120, and Asp144 each contribute to the S-adenosyl-L-methionine site. The active-site Proton acceptor is the Lys184.

It belongs to the class I-like SAM-binding methyltransferase superfamily. RNA methyltransferase RlmE family.

It is found in the cytoplasm. It carries out the reaction uridine(2552) in 23S rRNA + S-adenosyl-L-methionine = 2'-O-methyluridine(2552) in 23S rRNA + S-adenosyl-L-homocysteine + H(+). Functionally, specifically methylates the uridine in position 2552 of 23S rRNA at the 2'-O position of the ribose in the fully assembled 50S ribosomal subunit. The sequence is that of Ribosomal RNA large subunit methyltransferase E from Rhizobium leguminosarum bv. trifolii (strain WSM2304).